Reading from the N-terminus, the 439-residue chain is Gap junction gamma-2 protein (439 aa).

Residues 1–25 are Cytoplasmic-facing; the sequence is MTNMSWSFLTRLLEEIHNHSTFVGK. The chain crosses the membrane as a helical span at residues 26-46; sequence VWLTVLVVFRIVLTAVGGEAI. At 47-78 the chain is on the extracellular side; the sequence is YSDEQAKFTCNTRQPGCDNVCYDAFAPLSHVR. Residues 79-99 traverse the membrane as a helical segment; that stretch reads FWVFQIVVISTPSVMYLGYAV. The Cytoplasmic portion of the chain corresponds to 100 to 216; it reads HRLARASEQE…EGLMRVYVAQ (117 aa). Residues 108 to 178 are disordered; sequence QERRRALRRR…AEEAGAEEAC (71 aa). Basic residues predominate over residues 112–125; it reads RALRRRPGPRRAPR. Acidic residues predominate over residues 140-174; it reads DLGEEEPMLGLGEEEEEEETGAAEGAGEEAEEAGA. The helical transmembrane segment at 217–237 threads the bilayer; it reads LVARAAFEVAFLVGQYLLYGF. Over 238-265 the chain is Extracellular; it reads EVRPFFPCSRQPCPHVVDCFVSRPTEKT. The chain crosses the membrane as a helical span at residues 266–286; the sequence is VFLLVMYVVSCLCLLLNLCEM. At 287–439 the chain is on the cytoplasmic side; the sequence is AHLGLGSAQD…SRDGKTTVWI (153 aa). The interval 364-439 is disordered; sequence AGDRDRDSSP…SRDGKTTVWI (76 aa). Ser-371 is subject to Phosphoserine. Residues 378-393 are compositionally biased toward low complexity; sequence PAASRGPPRAGAPASR.

It belongs to the connexin family. Gamma-type subfamily. As to quaternary structure, a connexon is composed of a hexamer of connexins. Interacts with TJP1. In terms of tissue distribution, expressed in central nervous system, in sciatic nerve and sural nerve. Also detected in skeletal muscles.

It localises to the cell membrane. The protein localises to the cell junction. It is found in the gap junction. Its function is as follows. One gap junction consists of a cluster of closely packed pairs of transmembrane channels, the connexons, through which materials of low MW diffuse from one cell to a neighboring cell. May play a role in myelination in central and peripheral nervous systems. The chain is Gap junction gamma-2 protein (GJC2) from Homo sapiens (Human).